The chain runs to 272 residues: Dickkopf-related protein 1 (272 aa).

A signal peptide spans 1–31 (MMVVCAAAAVRFLAVFTMMALCSLPLLGASA). O-linked (GalNAc...) serine glycosylation is present at serine 62. 10 cysteine pairs are disulfide-bonded: cysteine 86-cysteine 98, cysteine 92-cysteine 114, cysteine 117-cysteine 131, cysteine 124-cysteine 136, cysteine 130-cysteine 141, cysteine 195-cysteine 207, cysteine 201-cysteine 216, cysteine 206-cysteine 243, cysteine 226-cysteine 251, and cysteine 245-cysteine 269. The tract at residues 86–141 (CAEDEECGSDEYCSSPSRGAAGVGGVQICLACRKRRKRCMRHAMCCPGNYCKNGIC) is DKK-type Cys-1. The DKK-type Cys-2 stretch occupies residues 195–269 (CLRSSDCAAG…ASNSSRLHTC (75 aa)). A glycan (N-linked (GlcNAc...) asparagine) is linked at asparagine 262.

This sequence belongs to the dickkopf family. In terms of assembly, interacts (via the C-terminal Cys-rich domain) with LRP5 (via beta-propeller regions 3 and 4); the interaction, enhanced by MESD and or KREMEN, antagonizes Wnt-mediated signaling. Interacts with LRP6. Forms a ternary complex with LRP6 and KREM1. Interacts with KREM1.

It localises to the secreted. Functionally, antagonizes canonical Wnt signaling by inhibiting LRP5/6 interaction with Wnt and by forming a ternary complex with the transmembrane protein KREMEN that promotes internalization of LRP5/6. Inhibits the pro-apoptotic function of KREMEN1 in a Wnt-independent manner, and has anti-apoptotic activity. Plays a role in limb development; attenuates Wnt signaling in the developing limb to allow normal limb patterning. This is Dickkopf-related protein 1 (Dkk1) from Mus musculus (Mouse).